A 215-amino-acid polypeptide reads, in one-letter code: MGVRAQQKEKTRRSLVEAAFSQLSAERSFASLSLREVAREAGIAPTSFYRHFRDVDELGLTMVDESGLMLRQLMRQARQRIAKGGSVIRTSVSTFMEFIGNNPNAFRLLLRERSGTSAAFRAAVAREIQHFIAELADYLELENHMPRAFTEAQAEAMVTIVFSAGAEALDIGVEQRRQLEERLVLQLRMISKGAYYWYRREQEKTAIIPGNVKDE.

The HTH tetR-type domain maps to 10 to 70 (KTRRSLVEAA…TMVDESGLML (61 aa)). A DNA-binding region (H-T-H motif) is located at residues 33–52 (SLREVAREAGIAPTSFYRHF).

In terms of assembly, homodimer.

The protein localises to the cytoplasm. In terms of biological role, represses the transcription of fabB, involved in unsaturated fatty acid (UFA) biosynthesis. By controlling UFA production, FabR directly influences the physical properties of the membrane bilayer. This chain is HTH-type transcriptional repressor FabR, found in Escherichia coli O9:H4 (strain HS).